Reading from the N-terminus, the 72-residue chain is Conorfamide-Tx2 (72 aa).

An N-terminal signal peptide occupies residues 1-19 (MSGRGFLLLALLLLVTVEA). Residues 20-25 (TRVEKK) constitute a propeptide that is removed on maturation. The tract at residues 32–39 (AWSGPRNR) is positively charged region crucial for activity against MRGPRX1 receptors. I43 is modified (isoleucine amide). Residues 44–72 (GRRDMQSPLLSERLRFRALGFRQPSSQKQ) constitute a propeptide that is removed on maturation.

Belongs to the FARP (FMRFamide related peptide) family. In terms of tissue distribution, expressed by the venom duct.

Its subcellular location is the secreted. Its function is as follows. This peptide activates human sensory neuron-specific G-protein coupled receptors MRGPRX1, but not mouse receptors (EC(50)=0.54 uM). Compared with the agonist chloroquine (anti-malaria drug), it is 600-fold more potent. In vivo, induces itch sensation, since intradermal cheek injection into humanized transgenic mouse (mouse MRGPRX1 replaced by human MRGPRX1) induces scratching. In vivo, treatment of zebrafish larvae with high doses (10 uM) induces hypoactivity at the beginning of the experiment during the dark phase and hyperactivity in the strobe phase after one hour, even after the removal of the toxin from the solution. The sequence is that of Conorfamide-Tx2 from Conus textile (Cloth-of-gold cone).